The sequence spans 379 residues: Inositol 3-kinase (379 aa).

ATP contacts are provided by residues Ser217, 267–270 (GAGD), and Asn294. Asp270 acts as the Proton acceptor in catalysis.

Belongs to the carbohydrate kinase pfkB family.

The catalysed reaction is myo-inositol + ATP = 1D-myo-inositol 3-phosphate + ADP + H(+). In terms of biological role, kinase that phosphorylates myo-inositol to produce multiple myo-inositol monophosphates, Ins(1)P, Ins(3)P, Ins(4)P, Ins(5)P and Ins(6)P. Participates in phytic acid biosynthesis in developing seeds. Phytic acid is the primary storage form of phosphorus in cereal grains and other plant seeds. This chain is Inositol 3-kinase, found in Zea mays (Maize).